Here is a 351-residue protein sequence, read N- to C-terminus: Anthranilate phosphoribosyltransferase (351 aa).

Residues Gly-80, 83-84 (GD), Thr-88, 90-93 (NIST), 108-116 (KHGNRSVTS), and Ser-120 each bind 5-phospho-alpha-D-ribose 1-diphosphate. Gly-80 contributes to the anthranilate binding site. Ser-92 lines the Mg(2+) pocket. Position 111 (Asn-111) interacts with anthranilate. Arg-166 provides a ligand contact to anthranilate. Mg(2+) is bound by residues Asp-229 and Glu-230.

Belongs to the anthranilate phosphoribosyltransferase family. Homodimer. It depends on Mg(2+) as a cofactor.

It catalyses the reaction N-(5-phospho-beta-D-ribosyl)anthranilate + diphosphate = 5-phospho-alpha-D-ribose 1-diphosphate + anthranilate. It functions in the pathway amino-acid biosynthesis; L-tryptophan biosynthesis; L-tryptophan from chorismate: step 2/5. In terms of biological role, catalyzes the transfer of the phosphoribosyl group of 5-phosphorylribose-1-pyrophosphate (PRPP) to anthranilate to yield N-(5'-phosphoribosyl)-anthranilate (PRA). In Chlorobium limicola (strain DSM 245 / NBRC 103803 / 6330), this protein is Anthranilate phosphoribosyltransferase.